We begin with the raw amino-acid sequence, 114 residues long: Large ribosomal subunit protein uL22 (114 aa).

It belongs to the universal ribosomal protein uL22 family. In terms of assembly, part of the 50S ribosomal subunit.

In terms of biological role, this protein binds specifically to 23S rRNA; its binding is stimulated by other ribosomal proteins, e.g. L4, L17, and L20. It is important during the early stages of 50S assembly. It makes multiple contacts with different domains of the 23S rRNA in the assembled 50S subunit and ribosome. Functionally, the globular domain of the protein is located near the polypeptide exit tunnel on the outside of the subunit, while an extended beta-hairpin is found that lines the wall of the exit tunnel in the center of the 70S ribosome. The chain is Large ribosomal subunit protein uL22 from Ehrlichia chaffeensis (strain ATCC CRL-10679 / Arkansas).